Consider the following 400-residue polypeptide: tRNA-specific adenosine deaminase TAD3 (400 aa).

The 136-residue stretch at 250–385 (SQWHPLRHAS…KSLNHHYAVF (136 aa)) folds into the CMP/dCMP-type deaminase domain. His-257 lines the Zn(2+) pocket. The disordered stretch occupies residues 273-320 (LFPNPSKIFDQDHVPPSNTDSPAKKQKTSSQSPDVQNDSREETVRDPS). The segment covering 309–320 (NDSREETVRDPS) has biased composition (basic and acidic residues). Cys-339 and Cys-342 together coordinate Zn(2+).

This sequence belongs to the cytidine and deoxycytidylate deaminase family. ADAT3 subfamily. As to quaternary structure, interacts with TAD2.

Its subcellular location is the nucleus. It localises to the cytoplasm. The enzyme catalyses adenosine(34) in tRNA + H2O + H(+) = inosine(34) in tRNA + NH4(+). Functionally, involved in RNA editing. Catalyzes the specific deamination of adenosine-34 in several cytosolic tRNA species. Generates inosine at the wobble position of the anticodon loop. The polypeptide is tRNA-specific adenosine deaminase TAD3 (Arabidopsis thaliana (Mouse-ear cress)).